Reading from the N-terminus, the 399-residue chain is Argininosuccinate synthase (399 aa).

8-16 (AYSGGLDTS) provides a ligand contact to ATP. Tyr-87 contributes to the L-citrulline binding site. Gly-117 contributes to the ATP binding site. Thr-119, Asn-123, and Asp-124 together coordinate L-aspartate. Residue Asn-123 coordinates L-citrulline. L-citrulline-binding residues include Arg-127, Ser-175, Glu-260, and Tyr-272.

This sequence belongs to the argininosuccinate synthase family. Type 1 subfamily. In terms of assembly, homotetramer.

The protein localises to the cytoplasm. It catalyses the reaction L-citrulline + L-aspartate + ATP = 2-(N(omega)-L-arginino)succinate + AMP + diphosphate + H(+). Its pathway is amino-acid biosynthesis; L-arginine biosynthesis; L-arginine from L-ornithine and carbamoyl phosphate: step 2/3. The sequence is that of Argininosuccinate synthase from Mycolicibacterium smegmatis (strain ATCC 700084 / mc(2)155) (Mycobacterium smegmatis).